The chain runs to 310 residues: MARRGKGRSINGIILLDKPTDISSNHALQRVKRIFFANKAGHTGALDPLATGMLPVCLGEATKFSQFLLDSDKRYIVTATLGVRTTTSDSQGDVVSERPVEVTQTQLDQALDTFRGDIMQVPSMFSALKHKGQPLYKYAREGITIEREARPITVYEINQLRFEGNEVELDIHVSKGTYIRTIVDDLGELLGCGAHVSVLRRTQVADYPYDKMVTIEQLEALIEQAKESDVSPYDLLDPLLLDMDTAVKKYPEVNISDEMGEYVLHGQPVQVFGAPDNTVLRITVGEAHTFIGVGKMNEAGLIAPTRLANL.

Residue Asp47 is the Nucleophile of the active site.

Belongs to the pseudouridine synthase TruB family. Type 1 subfamily.

It catalyses the reaction uridine(55) in tRNA = pseudouridine(55) in tRNA. Responsible for synthesis of pseudouridine from uracil-55 in the psi GC loop of transfer RNAs. This chain is tRNA pseudouridine synthase B, found in Psychromonas ingrahamii (strain DSM 17664 / CCUG 51855 / 37).